The primary structure comprises 698 residues: RNA cytosine-C(5)-methyltransferase NSUN2 (698 aa).

Positions 1-10 (MGRKNRRNRQ) are enriched in basic residues. A disordered region spans residues 1 to 28 (MGRKNRRNRQRRTEQRSPAEEERRKARE). Basic and acidic residues predominate over residues 11-28 (RRTEQRSPAEEERRKARE). S-adenosyl-L-methionine-binding positions include 182-188 (CAAPGSK), Asp213, Asp240, and Asp266. Catalysis depends on Cys319, which acts as the Nucleophile. Residues 472-496 (AVDAENGETKPCTNQSGSSKTDSVC) form a disordered region. Over residues 482-493 (PCTNQSGSSKTD) the composition is skewed to polar residues.

It belongs to the class I-like SAM-binding methyltransferase superfamily. RsmB/NOP family. TRM4 subfamily.

The protein resides in the nucleus. It is found in the nucleolus. It localises to the cytoplasm. The protein localises to the mitochondrion. Its subcellular location is the cytoskeleton. The protein resides in the spindle. It is found in the secreted. It localises to the extracellular exosome. The enzyme catalyses cytidine(48) in tRNA + S-adenosyl-L-methionine = 5-methylcytidine(48) in tRNA + S-adenosyl-L-homocysteine + H(+). The catalysed reaction is cytidine(49) in tRNA + S-adenosyl-L-methionine = 5-methylcytidine(49) in tRNA + S-adenosyl-L-homocysteine + H(+). It carries out the reaction cytidine(50) in tRNA + S-adenosyl-L-methionine = 5-methylcytidine(50) in tRNA + S-adenosyl-L-homocysteine + H(+). It catalyses the reaction cytidine(34) in tRNA precursor + S-adenosyl-L-methionine = 5-methylcytidine(34) in tRNA precursor + S-adenosyl-L-homocysteine + H(+). The enzyme catalyses a cytidine in mRNA + S-adenosyl-L-methionine = a 5-methylcytidine in mRNA + S-adenosyl-L-homocysteine + H(+). Its function is as follows. RNA cytosine C(5)-methyltransferase that methylates cytosine to 5-methylcytosine (m5C) in various RNAs, such as tRNAs, mRNAs and some long non-coding RNAs (lncRNAs). Involved in various processes, such as epidermal stem cell differentiation, testis differentiation and maternal to zygotic transition during early development: acts by increasing protein synthesis; cytosine C(5)-methylation promoting tRNA stability and preventing mRNA decay. Methylates cytosine to 5-methylcytosine (m5C) at positions 34 and 48 of intron-containing tRNA(Leu)(CAA) precursors, and at positions 48, 49 and 50 of tRNA(Gly)(GCC) precursors. tRNA methylation is required generation of RNA fragments derived from tRNAs (tRFs). Also mediates C(5)-methylation of mitochondrial tRNAs. Catalyzes cytosine C(5)-methylation of mRNAs, leading to stabilize them and prevent mRNA decay. Cytosine C(5)-methylation of mRNAs also regulates mRNA export. Also mediates cytosine C(5)-methylation of non-coding RNAs, such as vault RNAs (vtRNAs), promoting their processing into regulatory small RNAs. Required for proper spindle assembly and chromosome segregation, independently of its methyltransferase activity. The chain is RNA cytosine-C(5)-methyltransferase NSUN2 from Xenopus laevis (African clawed frog).